Here is a 92-residue protein sequence, read N- to C-terminus: Large ribosomal subunit protein bL27 (92 aa).

The propeptide occupies 1–9; sequence MLVMNLQYF.

This sequence belongs to the bacterial ribosomal protein bL27 family. Post-translationally, the N-terminus is cleaved by ribosomal processing cysteine protease Prp.

This is Large ribosomal subunit protein bL27 from Heliobacterium modesticaldum (strain ATCC 51547 / Ice1).